Here is a 309-residue protein sequence, read N- to C-terminus: Homoserine kinase (309 aa).

Position 95-105 (95-105 (PHGRGLGSSSA)) interacts with ATP.

Belongs to the GHMP kinase family. Homoserine kinase subfamily.

Its subcellular location is the cytoplasm. It carries out the reaction L-homoserine + ATP = O-phospho-L-homoserine + ADP + H(+). It functions in the pathway amino-acid biosynthesis; L-threonine biosynthesis; L-threonine from L-aspartate: step 4/5. In terms of biological role, catalyzes the ATP-dependent phosphorylation of L-homoserine to L-homoserine phosphate. The protein is Homoserine kinase of Streptomyces coelicolor (strain ATCC BAA-471 / A3(2) / M145).